We begin with the raw amino-acid sequence, 577 residues long: Thrombomodulin (577 aa).

The first 16 residues, 1–16 (MLGIFFLGVLAPASLG), serve as a signal peptide directing secretion. Residues 17 to 517 (LSALAKLQPT…GPPSARPVHS (501 aa)) lie on the Extracellular side of the membrane. Residues 31-167 (VEHECFALFQ…TETQGFLCEF (137 aa)) enclose the C-type lectin domain. A glycan (N-linked (GlcNAc...) asparagine) is linked at Asn113. An intrachain disulfide couples Cys135 to Cys156. EGF-like domains are found at residues 240–280 (GAWN…RSCA) and 283–323 (VVQS…HRCE). N-linked (GlcNAc...) asparagine glycosylation occurs at Asn243. Disulfide bonds link Cys244–Cys255, Cys251–Cys264, Cys266–Cys279, Cys287–Cys295, Cys291–Cys307, Cys309–Cys322, Cys328–Cys339, Cys335–Cys348, Cys350–Cys361, Cys368–Cys377, Cys373–Cys387, Cys389–Cys403, Cys407–Cys416, Cys412–Cys424, Cys426–Cys438, Cys444–Cys454, Cys449–Cys463, and Cys465–Cys479. N-linked (GlcNAc...) asparagine glycosylation is present at Asn256. Residues 324 to 362 (DVDDCKQGPNPCPQLCVNTKGGFECFCYDGYELVDGECV) form the EGF-like 3; calcium-binding domain. 2 EGF-like domains span residues 364 to 404 (LLDP…HKCE) and 403 to 439 (CEMF…SVCT). An N-linked (GlcNAc...) asparagine glycan is attached at Asn408. The EGF-like 6; calcium-binding domain maps to 440–480 (DIDECSQGECFTSECRNFPGSYECICGPDTALAGQISKDCD). A disordered region spans residues 476–513 (SKDCDPIPVREDTKEEEGSGEPPVSPTPGSPTGPPSAR). Basic and acidic residues predominate over residues 477-492 (KDCDPIPVREDTKEEE). Ser494 carries an O-linked (Xyl...) (chondroitin sulfate) serine glycan. Over residues 498-512 (PVSPTPGSPTGPPSA) the composition is skewed to pro residues. A helical transmembrane segment spans residues 518–541 (GVLIGISIASLSLVVALLALLCHL). Over 542–577 (RKKQGAARAELEYKCASSAKEVVLQHVRTDRTLQKF) the chain is Cytoplasmic.

Interacts with ITGAL, ITGAM and ITGB2. Interacts with thrombin/F2; this interaction switches the specificity of thrombin from a procoagulant to an anticoagulant and antifibrinolytic protease. Interacts with ANGP1 and ANGP2; these interactions significantly inhibit the generation of activated PC and TAFIa/CPB2 by the thrombin/thrombomodulin complex. Interacts with PF4; this interaction enhances generation of activated protein C. Interacts with HMGB1; this interaction inhibits HMGB1 inflammatory activity. As to expression, endothelial cells are unique in synthesizing thrombomodulin.

Its subcellular location is the membrane. Functionally, endothelial cell receptor that plays a critical role in regulating several physiological processes including hemostasis, coagulation, fibrinolysis, inflammation, and angiogenesis. Acts as a cofactor for thrombin activation of protein C/PROC on the surface of vascular endothelial cells leading to initiation of the activated protein C anticoagulant pathway. Also accelerates the activation of the plasma carboxypeptidase B2/CPB2, which catalyzes removal of C-terminal basic amino acids from its substrates including kinins or anaphylatoxins leading to fibrinolysis inhibition. Plays critical protective roles in changing the cleavage specificity of protease-activated receptor 1/PAR1, inhibiting endothelial cell permeability and inflammation. Suppresses inflammation distinctly from its anticoagulant cofactor activity by sequestering HMGB1 thereby preventing it from engaging cellular receptors such as RAGE and contributing to the inflammatory response. The chain is Thrombomodulin (Thbd) from Mus musculus (Mouse).